Here is a 294-residue protein sequence, read N- to C-terminus: MINGIINLKKEAGMTSHDAVFKLRKLLQEKKIGHGGTLDPDVVGVLPIAVGKATRVIEYMTEAGKVYEGQVTLGYSTTTEDASGEVVARSSLPAVLTEELVDQTMTTFLGKITQTPPMYSAVKVNGRKLYEYARTGESVERPRREVTISLFERTSPLNFTEDGLCRFSFKVACSKGTYVRTLAVDLGRALWVESHMSFLQRSASAGLTLETAYTLGEIADMVSKQEMSFLLPIEYGVADLPKMVIDDTELTEISFGRRLSLPSQEPLLAAFHGEKVIAILEKRDQEYKPKKVLI.

The active-site Nucleophile is Asp-39.

It belongs to the pseudouridine synthase TruB family. Type 1 subfamily.

It carries out the reaction uridine(55) in tRNA = pseudouridine(55) in tRNA. Responsible for synthesis of pseudouridine from uracil-55 in the psi GC loop of transfer RNAs. In Streptococcus pyogenes serotype M28 (strain MGAS6180), this protein is tRNA pseudouridine synthase B.